A 66-amino-acid polypeptide reads, in one-letter code: Large ribosomal subunit protein bL35 (66 aa).

It belongs to the bacterial ribosomal protein bL35 family.

The chain is Large ribosomal subunit protein bL35 from Rhodopseudomonas palustris (strain BisB18).